The chain runs to 309 residues: Large ribosomal subunit protein mL45 (309 aa).

Belongs to the mitochondrion-specific ribosomal protein mL45 family. As to quaternary structure, component of the mitochondrial ribosome large subunit (39S) which comprises a 16S rRNA and about 50 distinct proteins.

It localises to the mitochondrion. In terms of biological role, component of the mitochondrial large ribosomal subunit (mt-LSU). Within the mitochondrial ribosomes, required to direct the nascent polypeptide toward the tunnel exit and position the exit at a distance from the membrane surface. This is Large ribosomal subunit protein mL45 (mrpl45) from Xenopus tropicalis (Western clawed frog).